The primary structure comprises 293 residues: Ribonuclease HIII (293 aa).

The 216-residue stretch at 78–293 folds into the RNase H type-2 domain; it reads LPLIGTDEVG…TEKAKKRLER (216 aa). Positions 84, 85, and 187 each coordinate a divalent metal cation.

This sequence belongs to the RNase HII family. RnhC subfamily. Requires Mn(2+) as cofactor. The cofactor is Mg(2+).

Its subcellular location is the cytoplasm. The catalysed reaction is Endonucleolytic cleavage to 5'-phosphomonoester.. Endonuclease that specifically degrades the RNA of RNA-DNA hybrids. The polypeptide is Ribonuclease HIII (Streptococcus pneumoniae (strain 70585)).